We begin with the raw amino-acid sequence, 464 residues long: Cell division protein FtsA (464 aa).

The disordered stretch occupies residues 392–464 (EVIESDKDSE…FKKLMKSLFE (73 aa)). The span at 416–455 (KKENDEVAPEAPREESYEDRENHLEDEQQTEGKAKEESKF) shows a compositional bias: basic and acidic residues.

The protein belongs to the FtsA/MreB family. In terms of assembly, self-interacts. Interacts with FtsZ.

Its subcellular location is the cell membrane. In terms of biological role, cell division protein that is involved in the assembly of the Z ring. May serve as a membrane anchor for the Z ring. This is Cell division protein FtsA from Staphylococcus epidermidis (strain ATCC 35984 / DSM 28319 / BCRC 17069 / CCUG 31568 / BM 3577 / RP62A).